A 503-amino-acid polypeptide reads, in one-letter code: ATP-dependent RNA helicase dbp3 (503 aa).

The span at methionine 1–glutamate 25 shows a compositional bias: basic and acidic residues. The disordered stretch occupies residues methionine 1–alanine 35. The short motif at serine 104 to glutamine 112 is the Q motif element. The Helicase ATP-binding domain occupies tryptophan 116 to valine 292. Residue alanine 129–threonine 136 participates in ATP binding. A DEAD box motif is present at residues aspartate 239–aspartate 242. In terms of domain architecture, Helicase C-terminal spans arginine 307 to glycine 472.

Belongs to the DEAD box helicase family. DDX5/DBP2 subfamily.

Its subcellular location is the nucleus. The protein localises to the nucleolus. It catalyses the reaction ATP + H2O = ADP + phosphate + H(+). Its function is as follows. ATP-dependent RNA helicase required for 60S ribosomal subunit synthesis. Involved in efficient pre-rRNA processing, predominantly at site A3, which is necessary for the normal formation of 25S and 5.8S rRNAs. The polypeptide is ATP-dependent RNA helicase dbp3 (dbp3) (Neosartorya fischeri (strain ATCC 1020 / DSM 3700 / CBS 544.65 / FGSC A1164 / JCM 1740 / NRRL 181 / WB 181) (Aspergillus fischerianus)).